The following is a 54-amino-acid chain: Lectin alpha-1 chain (54 aa).

Belongs to the leguminous lectin family. In terms of assembly, tetramer of two alpha and two beta chains.

The chain is Lectin alpha-1 chain from Lathyrus cicera (Flat-pod pea).